Here is a 361-residue protein sequence, read N- to C-terminus: Versatile peroxidase VPL2 (361 aa).

The signal sequence occupies residues 1–22; the sequence is MSFKTLSALALALGAAVQFASA. The propeptide occupies 23–30; the sequence is AVPLVQKR. Intrachain disulfides connect Cys-33/Cys-45, Cys-44/Cys-308, Cys-64/Cys-144, and Cys-272/Cys-337. Mn(2+) is bound by residues Glu-66 and Glu-70. The active-site Proton acceptor is the His-77. 4 residues coordinate Ca(2+): Asp-78, Gly-90, Asp-92, and Ser-94. Asn-126 carries an N-linked (GlcNAc...) asparagine glycan. Catalysis depends on Trp-194, which acts as the Tryptophan radical intermediate. Position 199 (His-199) interacts with heme b. Residue Ser-200 coordinates Ca(2+). Heme b is bound at residue 203–207; the sequence is AADKV. Asp-205 contributes to the Mn(2+) binding site. Ca(2+)-binding residues include Asp-217, Thr-219, Val-222, and Asp-224.

This sequence belongs to the peroxidase family. Ligninase subfamily. Heme b is required as a cofactor. Ca(2+) serves as cofactor.

It localises to the secreted. It carries out the reaction 1-(4-hydroxy-3-methoxyphenyl)-2-(2-methoxyphenoxy)propane-1,3-diol + H2O2 = guaiacol + vanillin + glycolaldehyde + H2O. The catalysed reaction is 2 Mn(2+) + H2O2 + 2 H(+) = 2 Mn(3+) + 2 H2O. Functionally, a versatile ligninolytic peroxidase that combines the substrate specificity characteristics of the two other ligninolytic peroxidases, manganese peroxidase and lignin peroxidase. The sequence is that of Versatile peroxidase VPL2 (vpl2) from Pleurotus eryngii (Boletus of the steppes).